Here is a 154-residue protein sequence, read N- to C-terminus: Ribosome maturation factor RimP (154 aa).

Belongs to the RimP family.

The protein resides in the cytoplasm. Its function is as follows. Required for maturation of 30S ribosomal subunits. The chain is Ribosome maturation factor RimP from Heliobacterium modesticaldum (strain ATCC 51547 / Ice1).